Reading from the N-terminus, the 518-residue chain is 3-octaprenyl-4-hydroxybenzoate carboxy-lyase (518 aa).

Position 177 (Asn-177) interacts with Mn(2+). Prenylated FMN-binding positions include 180–182 (IYR), 194–196 (RWL), and 199–200 (RG). A Mn(2+)-binding site is contributed by Glu-243. Asp-318 serves as the catalytic Proton donor.

The protein belongs to the UbiD family. In terms of assembly, homohexamer. Requires prenylated FMN as cofactor. Mn(2+) is required as a cofactor.

It is found in the cell membrane. The catalysed reaction is a 4-hydroxy-3-(all-trans-polyprenyl)benzoate + H(+) = a 2-(all-trans-polyprenyl)phenol + CO2. It participates in cofactor biosynthesis; ubiquinone biosynthesis. In terms of biological role, catalyzes the decarboxylation of 3-octaprenyl-4-hydroxy benzoate to 2-octaprenylphenol, an intermediate step in ubiquinone biosynthesis. The protein is 3-octaprenyl-4-hydroxybenzoate carboxy-lyase of Burkholderia orbicola (strain AU 1054).